Here is a 318-residue protein sequence, read N- to C-terminus: GTP 3',8-cyclase (318 aa).

The region spanning 4 to 218 is the Radical SAM core domain; the sequence is KHGRNIDYLR…MSRSDLIPIE (215 aa). Arginine 13 lines the GTP pocket. Positions 20 and 24 each coordinate [4Fe-4S] cluster. Tyrosine 26 is an S-adenosyl-L-methionine binding site. Residue cysteine 27 coordinates [4Fe-4S] cluster. Residue arginine 62 participates in GTP binding. Position 66 (glycine 66) interacts with S-adenosyl-L-methionine. Position 93 (threonine 93) interacts with GTP. Serine 117 contacts S-adenosyl-L-methionine. Residue lysine 154 coordinates GTP. Methionine 188 contacts S-adenosyl-L-methionine. [4Fe-4S] cluster is bound by residues cysteine 248 and cysteine 251. Residue 253 to 255 participates in GTP binding; it reads KIR. Position 265 (cysteine 265) interacts with [4Fe-4S] cluster.

The protein belongs to the radical SAM superfamily. MoaA family. As to quaternary structure, monomer and homodimer. It depends on [4Fe-4S] cluster as a cofactor.

The enzyme catalyses GTP + AH2 + S-adenosyl-L-methionine = (8S)-3',8-cyclo-7,8-dihydroguanosine 5'-triphosphate + 5'-deoxyadenosine + L-methionine + A + H(+). The protein operates within cofactor biosynthesis; molybdopterin biosynthesis. Catalyzes the cyclization of GTP to (8S)-3',8-cyclo-7,8-dihydroguanosine 5'-triphosphate. This is GTP 3',8-cyclase from Clostridium acetobutylicum (strain ATCC 824 / DSM 792 / JCM 1419 / IAM 19013 / LMG 5710 / NBRC 13948 / NRRL B-527 / VKM B-1787 / 2291 / W).